We begin with the raw amino-acid sequence, 931 residues long: Valine--tRNA ligase (931 aa).

Residues 43–53 (PNVTGALHIGH) carry the 'HIGH' region motif. Residues 351–370 (IPHTDKDGNAHDAEPRTIQT) form a disordered region. Positions 353-365 (HTDKDGNAHDAEP) are enriched in basic and acidic residues. A 'KMSKS' region motif is present at residues 552 to 556 (KMSKS). Residue lysine 555 participates in ATP binding. The interval 691–717 (LQGRGLGEGDEAVPAPADGPLSPALSP) is disordered. Positions 864–930 (VIDIAAERER…DRLSAALARL (67 aa)) form a coiled coil.

It belongs to the class-I aminoacyl-tRNA synthetase family. ValS type 1 subfamily. As to quaternary structure, monomer.

It is found in the cytoplasm. It carries out the reaction tRNA(Val) + L-valine + ATP = L-valyl-tRNA(Val) + AMP + diphosphate. Functionally, catalyzes the attachment of valine to tRNA(Val). As ValRS can inadvertently accommodate and process structurally similar amino acids such as threonine, to avoid such errors, it has a 'posttransfer' editing activity that hydrolyzes mischarged Thr-tRNA(Val) in a tRNA-dependent manner. The sequence is that of Valine--tRNA ligase from Sphingopyxis alaskensis (strain DSM 13593 / LMG 18877 / RB2256) (Sphingomonas alaskensis).